The sequence spans 190 residues: Transmembrane protein 11, mitochondrial (190 aa).

A run of 2 helical transmembrane segments spans residues 84-100 (VLAGTACLFTPLALPLD) and 107-124 (LPAGVLSLACCTLYGISW).

The protein belongs to the TMEM11 family. As to quaternary structure, associates with the mitochondrial contact site and cristae organizing system (MICOS) complex, composed of at least MICOS10/MIC10, CHCHD3/MIC19, CHCHD6/MIC25, APOOL/MIC27, IMMT/MIC60, APOO/MIC23/MIC26 and QIL1/MIC13. This complex was also known under the names MINOS or MitOS complex. The MICOS complex associates with mitochondrial outer membrane proteins SAMM50, MTX1, MTX2 and DNAJC11, mitochondrial inner membrane protein TMEM11 and with HSPA9. Interacts with IMMT/MIC60.

The protein localises to the mitochondrion inner membrane. Functionally, plays a role in mitochondrial morphogenesis. This Mus musculus (Mouse) protein is Transmembrane protein 11, mitochondrial (Tmem11).